The chain runs to 216 residues: Pyrophosphatase PpaX (216 aa).

The active-site Nucleophile is aspartate 9.

This sequence belongs to the HAD-like hydrolase superfamily. PpaX family. Mg(2+) is required as a cofactor.

It catalyses the reaction diphosphate + H2O = 2 phosphate + H(+). Its function is as follows. Hydrolyzes pyrophosphate formed during P-Ser-HPr dephosphorylation by HPrK/P. Might play a role in controlling the intracellular pyrophosphate pool. The protein is Pyrophosphatase PpaX of Bacillus cereus (strain AH820).